Here is a 249-residue protein sequence, read N- to C-terminus: Metal-staphylopine import system ATP-binding protein CntF (249 aa).

Positions 2–244 (IKVTDVEKSY…DNAYTRELIE (243 aa)) constitute an ABC transporter domain. 42–49 (GESGSGKS) contributes to the ATP binding site.

Belongs to the ABC transporter superfamily. As to quaternary structure, the complex is composed of two ATP-binding proteins (CntD and CntF), two transmembrane proteins (CntB and CntC) and a solute-binding protein (CntA).

It localises to the cell membrane. In terms of biological role, part of the ABC transporter complex CntABCDF (Opp1) involved in the uptake of metal in complex with the metallophore staphylopine (StP). May be involved in the import of a large array of divalent metals ions such as nickel, cobalt, zinc, copper and iron. Probably responsible for energy coupling to the transport system. The polypeptide is Metal-staphylopine import system ATP-binding protein CntF (Staphylococcus aureus (strain Mu50 / ATCC 700699)).